The chain runs to 550 residues: (+)-germacrene D synthase (550 aa).

The Mg(2+) site is built by Asp304, Asp308, and Glu455. A DDXXD motif motif is present at residues 304–308 (DDIYD).

The protein belongs to the terpene synthase family. Tpsa subfamily. Requires Mg(2+) as cofactor. It depends on Mn(2+) as a cofactor. Co(2+) serves as cofactor. The cofactor is Ni(2+).

The protein resides in the cytoplasm. It carries out the reaction (2E,6E)-farnesyl diphosphate = (+)-germacrene D + diphosphate. It participates in secondary metabolite biosynthesis; terpenoid biosynthesis. Involved in the biosynthesis of germacrene D. Can use farnesyl diphosphate as substrate, but not geranyl diphosphate. Produces mainly (+)-germacrene D along with germacrene B and a number of minor by-products. This chain is (+)-germacrene D synthase, found in Zingiber officinale (Ginger).